The primary structure comprises 495 residues: Probable cytosol aminopeptidase (495 aa).

Lys-258 and Asp-263 together coordinate Mn(2+). The active site involves Lys-270. Positions 281, 340, and 342 each coordinate Mn(2+). The active site involves Arg-344.

This sequence belongs to the peptidase M17 family. It depends on Mn(2+) as a cofactor.

The protein resides in the cytoplasm. The enzyme catalyses Release of an N-terminal amino acid, Xaa-|-Yaa-, in which Xaa is preferably Leu, but may be other amino acids including Pro although not Arg or Lys, and Yaa may be Pro. Amino acid amides and methyl esters are also readily hydrolyzed, but rates on arylamides are exceedingly low.. It catalyses the reaction Release of an N-terminal amino acid, preferentially leucine, but not glutamic or aspartic acids.. Presumably involved in the processing and regular turnover of intracellular proteins. Catalyzes the removal of unsubstituted N-terminal amino acids from various peptides. In Leptospira interrogans serogroup Icterohaemorrhagiae serovar Lai (strain 56601), this protein is Probable cytosol aminopeptidase.